The chain runs to 354 residues: Serine/threonine-protein kinase ppk34 (354 aa).

The region spanning 40 to 331 is the Protein kinase domain; sequence YRLKNMLGYG…IEELLRDPFL (292 aa). ATP-binding positions include 46-54 and Lys69; that span reads LGYGACSTV. The active-site Proton acceptor is the Asp200.

This sequence belongs to the protein kinase superfamily. Ser/Thr protein kinase family.

The protein resides in the cytoplasm. It is found in the nucleus. The catalysed reaction is L-seryl-[protein] + ATP = O-phospho-L-seryl-[protein] + ADP + H(+). It carries out the reaction L-threonyl-[protein] + ATP = O-phospho-L-threonyl-[protein] + ADP + H(+). The chain is Serine/threonine-protein kinase ppk34 (ppk34) from Schizosaccharomyces pombe (strain 972 / ATCC 24843) (Fission yeast).